Here is a 107-residue protein sequence, read N- to C-terminus: Thioredoxin (107 aa).

The Thioredoxin domain occupies 2-107; that stretch reads SATPQVSDAS…TLASTLEKYL (106 aa). C32 and C35 are oxidised to a cystine.

This sequence belongs to the thioredoxin family.

In terms of biological role, component of the thioredoxin-thioredoxin reductase system. Participates in various redox reactions through the reversible oxidation of its active center dithiol to a disulfide and catalyzes dithiol-disulfide exchange reactions. The sequence is that of Thioredoxin (trxA) from Synechocystis sp. (strain ATCC 27184 / PCC 6803 / Kazusa).